Reading from the N-terminus, the 295-residue chain is uncharacterized protein (295 aa).

The first 19 residues, 1-19 (MFKKYIFILILFIASIARA), serve as a signal peptide directing secretion. A disordered region spans residues 275–295 (RNNPPLKNNNAKGKNPYDTNK). The span at 276–295 (NNPPLKNNNAKGKNPYDTNK) shows a compositional bias: low complexity.

This is an uncharacterized protein from Rickettsia conorii (strain ATCC VR-613 / Malish 7).